The chain runs to 168 residues: NADH-quinone oxidoreductase subunit B (168 aa).

The [4Fe-4S] cluster site is built by Cys49, Cys50, Cys114, and Cys144.

It belongs to the complex I 20 kDa subunit family. In terms of assembly, NDH-1 is composed of 14 different subunits. Subunits NuoB, C, D, E, F, and G constitute the peripheral sector of the complex. [4Fe-4S] cluster serves as cofactor.

The protein resides in the cell membrane. It carries out the reaction a quinone + NADH + 5 H(+)(in) = a quinol + NAD(+) + 4 H(+)(out). Functionally, NDH-1 shuttles electrons from NADH, via FMN and iron-sulfur (Fe-S) centers, to quinones in the respiratory chain. Couples the redox reaction to proton translocation (for every two electrons transferred, four hydrogen ions are translocated across the cytoplasmic membrane), and thus conserves the redox energy in a proton gradient. The polypeptide is NADH-quinone oxidoreductase subunit B (Wolbachia sp. subsp. Brugia malayi (strain TRS)).